Here is an 823-residue protein sequence, read N- to C-terminus: MNDFKLPIYKYKDELIKVLKNHNVLIVESPTGSGKTTQLPRIIYEAGFAKLGKIGVTQPRRIATVSIAEYIAKHIGVNVGEEVGYKIRFEEITSPKTKIKLMTDGVLLQELKKDTLLYEYDVIIIDEAHERSLNIDFILGLIKDISRKRDDFKIIVSSATINTKIFSKYFNNAPVVSIETITYPVQIIYNPPLLNTSKGMILKIKEIVLNVIKEKKAGDILIFLSGEKEIKETIKELQELNSKKNLIIFPLYGRMPKEAQEQIFMTTPKNKRKIIVSTNIAETSITIENIKIVIDSGKVKTNKFQTKTHTYSLQEVPISKSSATQRAGRAGRLSKGTCYRLYKREDYQLREDYQKEEIYRTDLSEVVLRMADIGIRDFTHFDFISKPSTHSIQTASKILKSLDAINNKNELTEIGKYMILFPLIPAHSRALVEAMINYPQAIYQTTIGLSFLSTSGIFLLPQNEEMEARQAHLKYKNPMGDLIGFVNIFEDFKKALNKEAFTKENYLDLQGLEEIANVQMQLENIISKLNIPIIQKGVFDNEGYLKSIMRGMRDYICFKTSKKKYKTIKAQNVIIHPGSLISTDSVKYFVAGEIIETTKMYARSIGVLKKEWIDDIILNEEFKHNDISSKENQITNTGQTKIINEIKIGKKIFKAEYKNNIYVIKINLETLKEIIFKNELNNQNNEDLKKIKIQLMHKNITVFNNKKFLETIEIVKNMGKDWHCIKKYETKNVNIDEPEKMKNLLECTMQFISFPPKKNALFLSLETDYSGNFRLKPKQNFIMAIEESIESIKSLIENKEYIQKLHFIKKLINKVYKKLNYFF.

The Helicase ATP-binding domain maps to 16–179 (IKVLKNHNVL…FNNAPVVSIE (164 aa)). 29-36 (SPTGSGKT) provides a ligand contact to ATP. The DEAH box signature appears at 126–129 (DEAH). The Helicase C-terminal domain occupies 203–374 (KIKEIVLNVI…EVVLRMADIG (172 aa)).

The protein belongs to the DEAD box helicase family. DEAH subfamily.

It catalyses the reaction ATP + H2O = ADP + phosphate + H(+). Functionally, has RNA-stimulated ATPase activity and RNA helicase activity. Involved in global regulation of gene expression. Could be involved in RNA processing and post-transcriptional gene regulation. Essential for both tick transmission and mouse infection. This chain is ATP-dependent RNA helicase HrpA, found in Borreliella burgdorferi (strain ATCC 35210 / DSM 4680 / CIP 102532 / B31) (Borrelia burgdorferi).